Here is a 104-residue protein sequence, read N- to C-terminus: UPF0145 protein TM1040_1243 (104 aa).

The protein belongs to the UPF0145 family.

This chain is UPF0145 protein TM1040_1243, found in Ruegeria sp. (strain TM1040) (Silicibacter sp.).